The sequence spans 208 residues: N-(5'-phosphoribosyl)anthranilate isomerase (208 aa).

It belongs to the TrpF family.

It catalyses the reaction N-(5-phospho-beta-D-ribosyl)anthranilate = 1-(2-carboxyphenylamino)-1-deoxy-D-ribulose 5-phosphate. The protein operates within amino-acid biosynthesis; L-tryptophan biosynthesis; L-tryptophan from chorismate: step 3/5. The polypeptide is N-(5'-phosphoribosyl)anthranilate isomerase (Lactiplantibacillus plantarum (strain ATCC BAA-793 / NCIMB 8826 / WCFS1) (Lactobacillus plantarum)).